A 527-amino-acid chain; its full sequence is Phosphoenolpyruvate carboxykinase (ATP) (527 aa).

Substrate-binding residues include R55, Y191, and K197. ATP-binding positions include K197, H216, and 232–240; that span reads GLSGTGKTT. Mn(2+)-binding residues include K197 and H216. Position 253 (D253) interacts with Mn(2+). Positions 281, 318, and 443 each coordinate ATP. R318 is a substrate binding site.

The protein belongs to the phosphoenolpyruvate carboxykinase (ATP) family. Mn(2+) serves as cofactor.

The protein resides in the cytoplasm. The enzyme catalyses oxaloacetate + ATP = phosphoenolpyruvate + ADP + CO2. It participates in carbohydrate biosynthesis; gluconeogenesis. Involved in the gluconeogenesis. Catalyzes the conversion of oxaloacetate (OAA) to phosphoenolpyruvate (PEP) through direct phosphoryl transfer between the nucleoside triphosphate and OAA. The protein is Phosphoenolpyruvate carboxykinase (ATP) of Brevibacillus brevis (strain 47 / JCM 6285 / NBRC 100599).